The chain runs to 195 residues: Calcineurin B homologous protein 1 (195 aa).

The N-myristoyl glycine moiety is linked to residue Gly2. A Necessary for association with microtubule and interaction with GAPDH motif is present at residues 2–6 (GSRAS). 4 EF-hand domains span residues 26–61 (SQIT…AINP), 66–101 (IINA…KSKD), 110–145 (SRSN…MVGV), and 151–186 (QLGS…VDVE). The Ca(2+) site is built by Asp123, Asp125, Asp127, Lys129, and Glu134. The Nuclear export signal 1 signature appears at 138–147 (VLRMMVGVNI). Ca(2+) is bound by residues Asp164, Asp166, Asp168, and Glu175. Residues 176–185 (FVKVLEKVDV) carry the Nuclear export signal 2 motif.

This sequence belongs to the calcineurin regulatory subunit family. CHP subfamily. Monomer. Interacts with STK17B; the interaction occurs in a calcium-independent manner and induces the translocation of CHP1 from the Golgi to the nucleus. Interacts with GAPDH; the interaction is direct, occurs in a N-myristoylation-dependent manner and facilitates the ability of CHP1 to bind microtubules. Interacts with KIF1B (via the C-terminal end of the kinesin-motor domain); the interaction occurs in a calcium-dependent manner. Associates (via C-terminal domain) with microtubules; the association occurs with polymerized microtubules during the cell cycle in a myristoylation- and calcium-independent manner and is enhanced by GAPDH. Interacts with PPP3CA. Interacts with SLC9A1/NHE1 (via the cytoplasmic C-terminal domain); the interaction occurs at the plasma membrane in a calcium-dependent manner and at a domain that is critical for growth factor stimulation of the exchanger. Interacts with SLC9A3; increases SLC9A3 trafficking and activity at the plasma membrane. Phosphorylated; decreased phosphorylation is associated with an increase in SLC9A1/NHE1 Na(+)/H(+) exchange activity. Phosphorylation occurs in serum-dependent manner. The phosphorylation state may regulate the binding to SLC9A1/NHE1. In terms of processing, both N-myristoylation and calcium-mediated conformational changes are essential for its function in exocytic traffic. N-myristoylation is required for its association with microtubules and interaction with GAPDH, but not for the constitutive association to membranes.

It localises to the nucleus. Its subcellular location is the cytoplasm. The protein localises to the cytoskeleton. The protein resides in the endomembrane system. It is found in the endoplasmic reticulum-Golgi intermediate compartment. It localises to the endoplasmic reticulum. Its subcellular location is the cell membrane. The protein localises to the membrane. Calcium-binding protein involved in different processes such as regulation of vesicular trafficking, plasma membrane Na(+)/H(+) exchanger and gene transcription. Involved in the constitutive exocytic membrane traffic. Mediates the association between microtubules and membrane-bound organelles of the endoplasmic reticulum and Golgi apparatus and is also required for the targeting and fusion of transcytotic vesicles (TCV) with the plasma membrane. Functions as an integral cofactor in cell pH regulation by controlling plasma membrane-type Na(+)/H(+) exchange activity. Affects the pH sensitivity of SLC9A1/NHE1 by increasing its sensitivity at acidic pH. Required for the stabilization and localization of SLC9A1/NHE1 at the plasma membrane. Inhibits serum- and GTPase-stimulated Na(+)/H(+) exchange. Plays a role as an inhibitor of ribosomal RNA transcription by repressing the nucleolar UBF1 transcriptional activity. May sequester UBF1 in the nucleoplasm and limit its translocation to the nucleolus. Associates to the ribosomal gene promoter. Acts as a negative regulator of the calcineurin/NFAT signaling pathway. Inhibits NFAT nuclear translocation and transcriptional activity by suppressing the calcium-dependent calcineurin phosphatase activity. Also negatively regulates the kinase activity of the apoptosis-induced kinase STK17B. Inhibits both STK17B auto- and substrate-phosphorylations in a calcium-dependent manner. This Bos taurus (Bovine) protein is Calcineurin B homologous protein 1 (CHP1).